Reading from the N-terminus, the 103-residue chain is Large ribosomal subunit protein uL24 (103 aa).

The protein belongs to the universal ribosomal protein uL24 family. As to quaternary structure, part of the 50S ribosomal subunit.

One of two assembly initiator proteins, it binds directly to the 5'-end of the 23S rRNA, where it nucleates assembly of the 50S subunit. In terms of biological role, one of the proteins that surrounds the polypeptide exit tunnel on the outside of the subunit. This is Large ribosomal subunit protein uL24 from Sinorhizobium fredii (strain NBRC 101917 / NGR234).